The following is a 726-amino-acid chain: Methionine--tRNA ligase (726 aa).

Residues 12–22 (PYVNNIPHLGN) carry the 'HIGH' region motif. 4 residues coordinate Zn(2+): Cys-143, Cys-146, Cys-155, and Cys-158. Positions 330–334 (KFSKS) match the 'KMSKS' region motif. Position 333 (Lys-333) interacts with ATP. The region spanning 562-667 (FSEKVCLKVV…DNPIPGERII (106 aa)) is the tRNA-binding domain.

Belongs to the class-I aminoacyl-tRNA synthetase family. MetG type 1 subfamily. In terms of assembly, homodimer. Requires Zn(2+) as cofactor.

It localises to the cytoplasm. It carries out the reaction tRNA(Met) + L-methionine + ATP = L-methionyl-tRNA(Met) + AMP + diphosphate. Is required not only for elongation of protein synthesis but also for the initiation of all mRNA translation through initiator tRNA(fMet) aminoacylation. In Borrelia turicatae (strain 91E135), this protein is Methionine--tRNA ligase.